We begin with the raw amino-acid sequence, 122 residues long: Basic phospholipase A2 homolog (122 aa).

7 cysteine pairs are disulfide-bonded: Cys26/Cys115, Cys28/Cys44, Cys43/Cys95, Cys49/Cys122, Cys50/Cys88, Cys57/Cys81, and Cys75/Cys86. The segment at 105 to 117 (KRYMTYPNILCSS) is important for membrane-damaging activities in eukaryotes and bacteria; heparin-binding.

Belongs to the phospholipase A2 family. Group II subfamily. N49 sub-subfamily. As to expression, expressed by the venom gland.

Its subcellular location is the secreted. This Gloydius halys (Chinese water mocassin) protein is Basic phospholipase A2 homolog.